Reading from the N-terminus, the 122-residue chain is Large ribosomal subunit protein uL14 (122 aa).

The protein belongs to the universal ribosomal protein uL14 family. In terms of assembly, part of the 50S ribosomal subunit. Forms a cluster with proteins L3 and L19. In the 70S ribosome, L14 and L19 interact and together make contacts with the 16S rRNA in bridges B5 and B8.

In terms of biological role, binds to 23S rRNA. Forms part of two intersubunit bridges in the 70S ribosome. The protein is Large ribosomal subunit protein uL14 of Borreliella afzelii (strain PKo) (Borrelia afzelii).